The following is a 91-amino-acid chain: Small ribosomal subunit protein uS19 (91 aa).

Belongs to the universal ribosomal protein uS19 family.

Its function is as follows. Protein S19 forms a complex with S13 that binds strongly to the 16S ribosomal RNA. The protein is Small ribosomal subunit protein uS19 of Ectopseudomonas mendocina (strain ymp) (Pseudomonas mendocina).